We begin with the raw amino-acid sequence, 141 residues long: Lutropin subunit beta (141 aa).

The N-terminal stretch at 1–20 is a signal peptide; the sequence is MEMFQGLLLWLLLGVAGVWA. Intrachain disulfides connect Cys29–Cys77, Cys43–Cys92, Cys46–Cys130, Cys54–Cys108, Cys58–Cys110, and Cys113–Cys120. An N-linked (GlcNAc...) asparagine glycan is attached at Asn33.

This sequence belongs to the glycoprotein hormones subunit beta family. As to quaternary structure, heterodimer of a common alpha chain and a unique beta chain which confers biological specificity to thyrotropin, lutropin, follitropin and gonadotropin.

It is found in the secreted. Its function is as follows. Promotes spermatogenesis and ovulation by stimulating the testes and ovaries to synthesize steroids. This Bos taurus (Bovine) protein is Lutropin subunit beta (LHB).